We begin with the raw amino-acid sequence, 37 residues long: Cytochrome b6-f complex subunit 5 (37 aa).

A helical membrane pass occupies residues Leu-5 to Ala-25.

This sequence belongs to the PetG family. The 4 large subunits of the cytochrome b6-f complex are cytochrome b6, subunit IV (17 kDa polypeptide, PetD), cytochrome f and the Rieske protein, while the 4 small subunits are PetG, PetL, PetM and PetN. The complex functions as a dimer.

It localises to the plastid. The protein resides in the chloroplast thylakoid membrane. Its function is as follows. Component of the cytochrome b6-f complex, which mediates electron transfer between photosystem II (PSII) and photosystem I (PSI), cyclic electron flow around PSI, and state transitions. PetG is required for either the stability or assembly of the cytochrome b6-f complex. The chain is Cytochrome b6-f complex subunit 5 from Ostreococcus tauri.